A 737-amino-acid chain; its full sequence is Polyribonucleotide nucleotidyltransferase (737 aa).

Residues aspartate 489 and aspartate 495 each coordinate Mg(2+). The 60-residue stretch at proline 556–isoleucine 615 folds into the KH domain. Residues aspartate 625 to lysine 693 form the S1 motif domain. A disordered region spans residues serine 691–glutamate 737. Basic and acidic residues predominate over residues proline 700–proline 714. Basic residues predominate over residues histidine 715 to lysine 724. The segment covering proline 725–glutamate 737 has biased composition (basic and acidic residues).

This sequence belongs to the polyribonucleotide nucleotidyltransferase family. Requires Mg(2+) as cofactor.

It is found in the cytoplasm. The enzyme catalyses RNA(n+1) + phosphate = RNA(n) + a ribonucleoside 5'-diphosphate. Involved in mRNA degradation. Catalyzes the phosphorolysis of single-stranded polyribonucleotides processively in the 3'- to 5'-direction. The chain is Polyribonucleotide nucleotidyltransferase from Streptococcus pneumoniae (strain Taiwan19F-14).